The following is a 232-amino-acid chain: Ribonuclease 3 (232 aa).

The RNase III domain maps to 6–133 (LKEIEENLGV…IIAAVYLDKG (128 aa)). Glu-46 is a Mg(2+) binding site. The active site involves Asp-50. Asp-119 and Glu-122 together coordinate Mg(2+). Residue Glu-122 is part of the active site. The 70-residue stretch at 160-229 (DFKTKLQELL…AKQALDILEG (70 aa)) folds into the DRBM domain.

It belongs to the ribonuclease III family. In terms of assembly, homodimer. It depends on Mg(2+) as a cofactor.

The protein localises to the cytoplasm. The catalysed reaction is Endonucleolytic cleavage to 5'-phosphomonoester.. Digests double-stranded RNA. Involved in the processing of primary rRNA transcript to yield the immediate precursors to the large and small rRNAs (23S and 16S). Processes some mRNAs, and tRNAs when they are encoded in the rRNA operon. Processes pre-crRNA and tracrRNA of type II CRISPR loci if present in the organism. This chain is Ribonuclease 3, found in Clostridium beijerinckii (strain ATCC 51743 / NCIMB 8052) (Clostridium acetobutylicum).